Reading from the N-terminus, the 88-residue chain is Small ribosomal subunit protein uS17 (88 aa).

This sequence belongs to the universal ribosomal protein uS17 family. As to quaternary structure, part of the 30S ribosomal subunit.

In terms of biological role, one of the primary rRNA binding proteins, it binds specifically to the 5'-end of 16S ribosomal RNA. In Prochlorococcus marinus (strain MIT 9215), this protein is Small ribosomal subunit protein uS17.